The primary structure comprises 120 residues: NAD(P)H-quinone oxidoreductase subunit 3 (120 aa).

A run of 3 helical transmembrane segments spans residues 10–30 (LLVFLIVCALLPVLALGASAL), 64–84 (MFALVFVIFDVETVFLYPWAV), and 89–109 (LGLLAFVEALIFIAILVVGLV).

This sequence belongs to the complex I subunit 3 family. NDH-1 can be composed of about 15 different subunits; different subcomplexes with different compositions have been identified which probably have different functions.

The protein localises to the cellular thylakoid membrane. It catalyses the reaction a plastoquinone + NADH + (n+1) H(+)(in) = a plastoquinol + NAD(+) + n H(+)(out). It carries out the reaction a plastoquinone + NADPH + (n+1) H(+)(in) = a plastoquinol + NADP(+) + n H(+)(out). Functionally, NDH-1 shuttles electrons from an unknown electron donor, via FMN and iron-sulfur (Fe-S) centers, to quinones in the respiratory and/or the photosynthetic chain. The immediate electron acceptor for the enzyme in this species is believed to be plastoquinone. Couples the redox reaction to proton translocation, and thus conserves the redox energy in a proton gradient. Cyanobacterial NDH-1 also plays a role in inorganic carbon-concentration. The chain is NAD(P)H-quinone oxidoreductase subunit 3 from Synechococcus sp. (strain JA-3-3Ab) (Cyanobacteria bacterium Yellowstone A-Prime).